Reading from the N-terminus, the 248-residue chain is Deoxyribose-phosphate aldolase (248 aa).

The Proton donor/acceptor role is filled by D117. K179 functions as the Schiff-base intermediate with acetaldehyde in the catalytic mechanism. Residue K208 is the Proton donor/acceptor of the active site.

It belongs to the DeoC/FbaB aldolase family. DeoC type 1 subfamily.

The protein localises to the cytoplasm. It catalyses the reaction 2-deoxy-D-ribose 5-phosphate = D-glyceraldehyde 3-phosphate + acetaldehyde. It functions in the pathway carbohydrate degradation; 2-deoxy-D-ribose 1-phosphate degradation; D-glyceraldehyde 3-phosphate and acetaldehyde from 2-deoxy-alpha-D-ribose 1-phosphate: step 2/2. In terms of biological role, catalyzes a reversible aldol reaction between acetaldehyde and D-glyceraldehyde 3-phosphate to generate 2-deoxy-D-ribose 5-phosphate. The polypeptide is Deoxyribose-phosphate aldolase (Thermotoga sp. (strain RQ2)).